A 338-amino-acid chain; its full sequence is Glyceraldehyde-3-phosphate dehydrogenase (338 aa).

NAD(+)-binding residues include R13, I14, D35, R80, and S123. D-glyceraldehyde 3-phosphate is bound by residues S152, C153, T154, T183, R198, T212, G213, and R235. Catalysis depends on C153, which acts as the Nucleophile. N317 contributes to the NAD(+) binding site.

The protein belongs to the glyceraldehyde-3-phosphate dehydrogenase family. Homotetramer.

The protein localises to the tegument membrane. The catalysed reaction is D-glyceraldehyde 3-phosphate + phosphate + NAD(+) = (2R)-3-phospho-glyceroyl phosphate + NADH + H(+). It functions in the pathway carbohydrate degradation; glycolysis; pyruvate from D-glyceraldehyde 3-phosphate: step 1/5. In terms of biological role, this antigen is associated with human resistance to schistosomiasis. The protein is Glyceraldehyde-3-phosphate dehydrogenase of Schistosoma mansoni (Blood fluke).